A 343-amino-acid polypeptide reads, in one-letter code: S-adenosylmethionine:tRNA ribosyltransferase-isomerase (343 aa).

The protein belongs to the QueA family. In terms of assembly, monomer.

It localises to the cytoplasm. The catalysed reaction is 7-aminomethyl-7-carbaguanosine(34) in tRNA + S-adenosyl-L-methionine = epoxyqueuosine(34) in tRNA + adenine + L-methionine + 2 H(+). Its pathway is tRNA modification; tRNA-queuosine biosynthesis. Transfers and isomerizes the ribose moiety from AdoMet to the 7-aminomethyl group of 7-deazaguanine (preQ1-tRNA) to give epoxyqueuosine (oQ-tRNA). This chain is S-adenosylmethionine:tRNA ribosyltransferase-isomerase, found in Stenotrophomonas maltophilia (strain R551-3).